A 258-amino-acid chain; its full sequence is Leucine-rich repeat-containing protein 3B (258 aa).

A signal peptide spans 1 to 33; that stretch reads MTPLDLWLSRSIPMCLLLQSLVLMVLCFPSAST. Positions 34 to 68 constitute an LRRNT domain; the sequence is CPKGCTCQRSESPPHGLNVTCSLSRLKEIPPDVPP. Residue Asn-51 is glycosylated (N-linked (GlcNAc...) asparagine). LRR repeat units lie at residues 69–90, 93–114, and 118–139; these read DTQL…IFHG, MLRR…AFIG, and SLEV…AFAR. Asn-98 carries an N-linked (GlcNAc...) asparagine glycan. An LRRCT domain is found at 149–196; the sequence is NPWHCDCALQQALGGMAHNHERVLCRSSELRDQEGQPFMAVDADLCNL. Residues 204–224 traverse the membrane as a helical segment; the sequence is AMLVTMFGWFAMVISYVVYYV.

It belongs to the LRRC3 family.

It is found in the membrane. The polypeptide is Leucine-rich repeat-containing protein 3B (lrrc3b) (Danio rerio (Zebrafish)).